The sequence spans 132 residues: U-scoloptoxin(11)-Sa1a (132 aa).

Residues 1–19 form the signal peptide; it reads MIRFFAFVLFFATQELILC.

Belongs to the scoloptoxin-11 family. Contains 5 disulfide bonds. In terms of tissue distribution, expressed by the venom gland.

It localises to the secreted. The chain is U-scoloptoxin(11)-Sa1a from Scolopendra alternans (Florida Keys giant centipede).